The following is a 237-amino-acid chain: LexA repressor (237 aa).

The segment at residues 26-46 (FDEMKEALDLRSKSGIHRLIT) is a DNA-binding region (H-T-H motif). Active-site for autocatalytic cleavage activity residues include Ser158 and Lys196.

The protein belongs to the peptidase S24 family. In terms of assembly, homodimer.

It carries out the reaction Hydrolysis of Ala-|-Gly bond in repressor LexA.. Functionally, represses a number of genes involved in the response to DNA damage (SOS response), including recA and lexA. In the presence of single-stranded DNA, RecA interacts with LexA causing an autocatalytic cleavage which disrupts the DNA-binding part of LexA, leading to derepression of the SOS regulon and eventually DNA repair. The chain is LexA repressor from Xanthobacter autotrophicus (strain ATCC BAA-1158 / Py2).